The sequence spans 732 residues: Acylamino-acid-releasing enzyme (732 aa).

Residue methionine 1 is modified to N-acetylmethionine. At serine 187 the chain carries Phosphoserine. Residues serine 587, aspartate 675, and histidine 707 each act as charge relay system in the active site.

The protein belongs to the peptidase S9C family. As to quaternary structure, homotetramer. Expressed in the liver (at protein level).

Its subcellular location is the cytoplasm. It catalyses the reaction Cleavage of an N-acetyl or N-formyl amino acid from the N-terminus of a polypeptide.. With respect to regulation, homotetramerization is required for activity. Tetramerization results in the formation of a gated channel which is involved in substrate selection and substrate access to the catalytic sites. In terms of biological role, this enzyme catalyzes the hydrolysis of the N-terminal peptide bond of an N-acetylated peptide to generate an N-acetylated amino acid and a peptide with a free N-terminus. It preferentially cleaves off Ac-Ala, Ac-Met and Ac-Ser. Also, involved in the degradation of oxidized and glycated proteins. This is Acylamino-acid-releasing enzyme (APEH) from Sus scrofa (Pig).